The following is a 363-amino-acid chain: Peroxisomal (S)-2-hydroxyacid oxidase GLO3 (363 aa).

Residues 1–357 (MDQIVNVDEF…TRNHVRTENE (357 aa)) form the FMN hydroxy acid dehydrogenase domain. Residues 78–80 (PTG), S107, 128–130 (QIY), and T156 each bind FMN. Residue Y130 coordinates a 2-oxocarboxylate. R165 is a binding site for a 2-oxocarboxylate. Positions 228 and 250 each coordinate FMN. H252 acts as the Proton acceptor in catalysis. R255 lines the a 2-oxocarboxylate pocket. Residues 283–287 (DGGVR) and 306–307 (GR) each bind FMN. The Microbody targeting signal signature appears at 361-363 (SML).

This sequence belongs to the FMN-dependent alpha-hydroxy acid dehydrogenase family. As to quaternary structure, homotetramer. FMN is required as a cofactor.

The protein resides in the peroxisome. It catalyses the reaction a (2S)-2-hydroxycarboxylate + O2 = a 2-oxocarboxylate + H2O2. The enzyme catalyses 2-hydroxy-4-methylpentanoate + O2 = 4-methyl-2-oxopentanoate + H2O2. It carries out the reaction 2-hydroxyhexanoate + O2 = 2-oxohexanoate + H2O2. The catalysed reaction is 2-hydroxyoctanoate + O2 = 2-oxooctanoate + H2O2. Functionally, oxidase that catalyzes the oxidation of a broad range of 2-hydroxyacids to the corresponding 2-oxoacids, with a reduction of O2 to H2O2. Displays the highest activity with leucic acid (2-hydroxy-4-methylpentanoate) and has intermediate activity with 2-hydroxyhexanoate and 2-hydroxyoctanote. Shows lower activity with 2-hydroxydodecanoate, valic acid, and isoleucic acid and extremely low activity with glycolate and L-lactate. Cannot use 2-hydroxyhexadecanoate or D-lactate as substrates. May be involved in the conversion or degradation of 2-hydroxyacids produced during the metabolism of fatty acids or amino acids. This Arabidopsis thaliana (Mouse-ear cress) protein is Peroxisomal (S)-2-hydroxyacid oxidase GLO3 (GLO3).